We begin with the raw amino-acid sequence, 179 residues long: ATP synthase subunit delta (179 aa).

The protein belongs to the ATPase delta chain family. In terms of assembly, F-type ATPases have 2 components, F(1) - the catalytic core - and F(0) - the membrane proton channel. F(1) has five subunits: alpha(3), beta(3), gamma(1), delta(1), epsilon(1). F(0) has three main subunits: a(1), b(2) and c(10-14). The alpha and beta chains form an alternating ring which encloses part of the gamma chain. F(1) is attached to F(0) by a central stalk formed by the gamma and epsilon chains, while a peripheral stalk is formed by the delta and b chains.

The protein localises to the cell inner membrane. F(1)F(0) ATP synthase produces ATP from ADP in the presence of a proton or sodium gradient. F-type ATPases consist of two structural domains, F(1) containing the extramembraneous catalytic core and F(0) containing the membrane proton channel, linked together by a central stalk and a peripheral stalk. During catalysis, ATP synthesis in the catalytic domain of F(1) is coupled via a rotary mechanism of the central stalk subunits to proton translocation. In terms of biological role, this protein is part of the stalk that links CF(0) to CF(1). It either transmits conformational changes from CF(0) to CF(1) or is implicated in proton conduction. This is ATP synthase subunit delta from Anaeromyxobacter sp. (strain K).